The sequence spans 88 residues: Small ribosomal subunit protein bS20 (88 aa).

Positions 1 to 23 (MPNTKSAEKALRVADANRQENRR) are enriched in basic and acidic residues. The interval 1–29 (MPNTKSAEKALRVADANRQENRRAKSQVK) is disordered.

Belongs to the bacterial ribosomal protein bS20 family.

Binds directly to 16S ribosomal RNA. This Dehalococcoides mccartyi (strain ATCC BAA-2100 / JCM 16839 / KCTC 5957 / BAV1) protein is Small ribosomal subunit protein bS20.